Here is a 78-residue protein sequence, read N- to C-terminus: MKEFLAYIVKNLVDKPEEVHLKEVQGTNTIIYELTVAKGDIGKIIGKEGRTIKAIRTLLVSVASRDNVKVSLEIMEER.

Residues 29–78 enclose the KH domain; the sequence is TIIYELTVAKGDIGKIIGKEGRTIKAIRTLLVSVASRDNVKVSLEIMEER.

This sequence belongs to the KhpA RNA-binding protein family.

The protein localises to the cytoplasm. A probable RNA-binding protein. In Chlamydia trachomatis serovar D (strain ATCC VR-885 / DSM 19411 / UW-3/Cx), this protein is RNA-binding protein KhpA.